The chain runs to 282 residues: Lipoyl synthase (282 aa).

Positions 37, 42, 48, 63, 67, 70, and 275 each coordinate [4Fe-4S] cluster. A Radical SAM core domain is found at 49 to 264 (WSRGTATFMI…RLVGIEKGFR (216 aa)).

Belongs to the radical SAM superfamily. Lipoyl synthase family. [4Fe-4S] cluster serves as cofactor.

Its subcellular location is the cytoplasm. It catalyses the reaction [[Fe-S] cluster scaffold protein carrying a second [4Fe-4S](2+) cluster] + N(6)-octanoyl-L-lysyl-[protein] + 2 oxidized [2Fe-2S]-[ferredoxin] + 2 S-adenosyl-L-methionine + 4 H(+) = [[Fe-S] cluster scaffold protein] + N(6)-[(R)-dihydrolipoyl]-L-lysyl-[protein] + 4 Fe(3+) + 2 hydrogen sulfide + 2 5'-deoxyadenosine + 2 L-methionine + 2 reduced [2Fe-2S]-[ferredoxin]. Its pathway is protein modification; protein lipoylation via endogenous pathway; protein N(6)-(lipoyl)lysine from octanoyl-[acyl-carrier-protein]: step 2/2. In terms of biological role, catalyzes the radical-mediated insertion of two sulfur atoms into the C-6 and C-8 positions of the octanoyl moiety bound to the lipoyl domains of lipoate-dependent enzymes, thereby converting the octanoylated domains into lipoylated derivatives. The protein is Lipoyl synthase of Porphyromonas gingivalis (strain ATCC BAA-308 / W83).